A 425-amino-acid chain; its full sequence is G protein-activated inward rectifier potassium channel 2 (425 aa).

Residues 1–91 (MTMAKLTESM…IFTTLVDLKW (91 aa)) lie on the Cytoplasmic side of the membrane. A phosphoserine mark is found at Ser-18 and Ser-25. The chain crosses the membrane as a helical span at residues 92–116 (RFNLLIFVMVYTVTWLFFGMIWWLI). Over 117-140 (AYIRGDMDHIEDPSWTPCVTNLNG) the chain is Extracellular. Residues 141–152 (FVSAFLFSIETE) constitute an intramembrane region (helical; Pore-forming). An intramembrane region (pore-forming) is located at residues 153 to 159 (TTIGYGY). The short motif at 154-159 (TIGYGY) is the Selectivity filter element. Residues 160 to 168 (RVITDKCPE) lie on the Extracellular side of the membrane. A helical membrane pass occupies residues 169–190 (GIILLLIQSVLGSIVNAFMVGC). Residues 191-425 (MFVKISQPKK…VANLENESKV (235 aa)) lie on the Cytoplasmic side of the membrane. The segment at 392 to 425 (NQHAELETEEEEKNPEELTERNGDVANLENESKV) is disordered. The PDZ-binding signature appears at 422 to 425 (ESKV).

Belongs to the inward rectifier-type potassium channel (TC 1.A.2.1) family. KCNJ6 subfamily. As to quaternary structure, associates with KCNJ3/GIRK1to form a G-protein-activated heteromultimer pore-forming unit. Associates with KCNJ5/GRIK4 to form a G-protein-activated heteromultimer pore-forming unit. The resulting inward current is much larger. Interacts (via PDZ-binding motif) with SNX27 (via PDZ domain); the interaction is required when endocytosed to prevent degradation in lysosomes and promote recycling to the plasma membrane. Associates with KCNJ3/GRIK1 to form a G-protein-activated heteromultimer pore-forming unit. In terms of assembly, associates with KCNJ3/GRIK1 to form a G-protein-activated heteromultimer pore-forming unit. The resulting inward current is much larger. In terms of tissue distribution, expressed in the brain.

The protein resides in the membrane. It carries out the reaction K(+)(in) = K(+)(out). Activated by phosphatidylinositol 4,5 biphosphate (PtdIns(4,5)P2). Its function is as follows. Inward rectifier potassium channels are characterized by a greater tendency to allow potassium to flow into the cell rather than out of it. Their voltage dependence is regulated by the concentration of extracellular potassium; as external potassium is raised, the voltage range of the channel opening shifts to more positive voltages. The inward rectification is mainly due to the blockage of outward current by internal magnesium. This potassium channel is controlled by G proteins. Forms a functional channel in association with KCNJ3/GIRK1. In terms of biological role, inward rectifier potassium channels are characterized by a greater tendency to allow potassium to flow into the cell rather than out of it. Their voltage dependence is regulated by the concentration of extracellular potassium; as external potassium is raised, the voltage range of the channel opening shifts to more positive voltages. The inward rectification is mainly due to the blockage of outward current by internal magnesium. This potassium channel is controlled by G proteins. This Mus musculus (Mouse) protein is G protein-activated inward rectifier potassium channel 2 (Kcnj6).